Here is a 247-residue protein sequence, read N- to C-terminus: Phosphonates import ATP-binding protein PhnC (247 aa).

Residues 5 to 246 enclose the ABC transporter domain; that stretch reads IEVKNLVKNY…EDDIRKVYQT (242 aa). Position 37–44 (37–44) interacts with ATP; sequence GESGAGKS.

This sequence belongs to the ABC transporter superfamily. Phosphonates importer (TC 3.A.1.9.1) family. The complex is composed of two ATP-binding proteins (PhnC), two transmembrane proteins (PhnE) and a solute-binding protein (PhnD).

It is found in the cell inner membrane. It catalyses the reaction phosphonate(out) + ATP + H2O = phosphonate(in) + ADP + phosphate + H(+). Its function is as follows. Part of the ABC transporter complex PhnCDE involved in phosphonates import. Responsible for energy coupling to the transport system. In Fusobacterium nucleatum subsp. nucleatum (strain ATCC 25586 / DSM 15643 / BCRC 10681 / CIP 101130 / JCM 8532 / KCTC 2640 / LMG 13131 / VPI 4355), this protein is Phosphonates import ATP-binding protein PhnC.